The chain runs to 396 residues: Pre-mycofactocin synthase (396 aa).

Residues methionine 1 to glycine 383 form the FMN hydroxy acid dehydrogenase domain. The FMN site is built by serine 108, glutamine 128, threonine 156, and lysine 254. Histidine 278 acts as the Proton acceptor in catalysis. Residues aspartate 309–arginine 313 and glycine 332–arginine 333 contribute to the FMN site.

This sequence belongs to the FMN-dependent alpha-hydroxy acid dehydrogenase family. Requires FMN as cofactor.

The catalysed reaction is 3-amino-5-[(4-hydroxyphenyl)methyl]-4,4-dimethyl-2-pyrrolidin-2-one + O2 + H2O = pre-mycofactocin + H2O2 + NH4(+). Functionally, involved in the biosynthesis of the enzyme cofactor mycofactocin (MFT). Catalyzes the oxidative deamination of AHDP (3-amino-5-[(4-hydroxyphenyl)methyl]-4,4-dimethyl-2-pyrrolidin-2-one), forming an alpha-keto amide moiety on the resulting molecule, which is called pre-mycofactocin (PMFT). This reaction occurs via a 5-[(4-hydroxyphenyl)methyl]-3-imino-4,4-dimethylpyrrolidin-2-one intermediate, which converts to PMFT. The alpha-keto amide moiety is the redox-active center for the redox activity of mycofactocin. The protein is Pre-mycofactocin synthase (mftD) of Mycobacterium tuberculosis (strain CDC 1551 / Oshkosh).